Consider the following 263-residue polypeptide: Small ribosomal subunit protein uS2 (263 aa).

Residues 228 to 263 (QLEEPEADLADEDDNGMTTSDDGDAEALDIPDDSDA) are disordered. Over residues 230-263 (EEPEADLADEDDNGMTTSDDGDAEALDIPDDSDA) the composition is skewed to acidic residues.

It belongs to the universal ribosomal protein uS2 family.

In Thermosynechococcus vestitus (strain NIES-2133 / IAM M-273 / BP-1), this protein is Small ribosomal subunit protein uS2.